A 144-amino-acid chain; its full sequence is 3-hydroxyacyl-[acyl-carrier-protein] dehydratase FabZ (144 aa).

Residue His-48 is part of the active site.

This sequence belongs to the thioester dehydratase family. FabZ subfamily.

It is found in the cytoplasm. The enzyme catalyses a (3R)-hydroxyacyl-[ACP] = a (2E)-enoyl-[ACP] + H2O. Involved in unsaturated fatty acids biosynthesis. Catalyzes the dehydration of short chain beta-hydroxyacyl-ACPs and long chain saturated and unsaturated beta-hydroxyacyl-ACPs. This Listeria innocua serovar 6a (strain ATCC BAA-680 / CLIP 11262) protein is 3-hydroxyacyl-[acyl-carrier-protein] dehydratase FabZ.